We begin with the raw amino-acid sequence, 310 residues long: Small ribosomal subunit biogenesis GTPase RsgA (310 aa).

In terms of domain architecture, CP-type G spans 77–238 (LSKQSHILAA…IIDTPGIKGF (162 aa)). GTP-binding positions include 126–129 (NKVD) and 180–188 (GHSGVGKST). Zn(2+) contacts are provided by cysteine 262, cysteine 267, histidine 269, and cysteine 275.

The protein belongs to the TRAFAC class YlqF/YawG GTPase family. RsgA subfamily. As to quaternary structure, monomer. Associates with 30S ribosomal subunit, binds 16S rRNA. Requires Zn(2+) as cofactor.

Its subcellular location is the cytoplasm. Its function is as follows. One of several proteins that assist in the late maturation steps of the functional core of the 30S ribosomal subunit. Helps release RbfA from mature subunits. May play a role in the assembly of ribosomal proteins into the subunit. Circularly permuted GTPase that catalyzes slow GTP hydrolysis, GTPase activity is stimulated by the 30S ribosomal subunit. In Bacteroides fragilis (strain ATCC 25285 / DSM 2151 / CCUG 4856 / JCM 11019 / LMG 10263 / NCTC 9343 / Onslow / VPI 2553 / EN-2), this protein is Small ribosomal subunit biogenesis GTPase RsgA.